Consider the following 462-residue polypeptide: Ribosomal protein uS12 methylthiotransferase RimO (462 aa).

The MTTase N-terminal domain maps to 10 to 125; it reads PRIGMVSLGC…VLDAVHRNLP (116 aa). [4Fe-4S] cluster is bound by residues cysteine 19, cysteine 55, cysteine 84, cysteine 160, cysteine 164, and cysteine 167. One can recognise a Radical SAM core domain in the interval 146–388; sequence LTPRHYAYLK…AVAEALSSAK (243 aa). The TRAM domain occupies 390–462; it reads QRRVGATMQV…RGHDLLAQPI (73 aa).

It belongs to the methylthiotransferase family. RimO subfamily. [4Fe-4S] cluster serves as cofactor.

The protein resides in the cytoplasm. The catalysed reaction is L-aspartate(89)-[ribosomal protein uS12]-hydrogen + (sulfur carrier)-SH + AH2 + 2 S-adenosyl-L-methionine = 3-methylsulfanyl-L-aspartate(89)-[ribosomal protein uS12]-hydrogen + (sulfur carrier)-H + 5'-deoxyadenosine + L-methionine + A + S-adenosyl-L-homocysteine + 2 H(+). In terms of biological role, catalyzes the methylthiolation of an aspartic acid residue of ribosomal protein uS12. The sequence is that of Ribosomal protein uS12 methylthiotransferase RimO from Verminephrobacter eiseniae (strain EF01-2).